We begin with the raw amino-acid sequence, 678 residues long: Platelet endothelial cell adhesion molecule (678 aa).

The N-terminal stretch at 1-17 is a signal peptide; sequence MLLALLLTMLLYASLQA. The Extracellular portion of the chain corresponds to 18-589; the sequence is QENSFTINSI…VRVFLAPWKK (572 aa). 6 consecutive Ig-like C2-type domains span residues 40–126, 135–213, 225–309, 315–391, 413–472, and 488–577; these read GQKL…PEVT, GGIV…FIRS, PKFQ…ILVN, PRPK…LVPV, GQII…NCHS, and PVDE…RSGP. Cys-47 and Cys-99 are oxidised to a cystine. Asn-74 and Asn-141 each carry an N-linked (GlcNAc...) asparagine glycan. Intrachain disulfides connect Cys-142–Cys-195 and Cys-245–Cys-293. N-linked (GlcNAc...) asparagine glycans are attached at residues Asn-309, Asn-345, Asn-360, Asn-424, and Asn-540. Disulfide bonds link Cys-336–Cys-375, Cys-420–Cys-465, and Cys-512–Cys-561. A helical membrane pass occupies residues 590–610; it reads GLIAVVVIGVVIAALIVAAKY. Residues 611 to 678 are Cytoplasmic-facing; the sequence is YFLRKAKAKQ…EPHQENGRLP (68 aa). Positions 634–653 are disordered; that stretch reads NSNSEKVSEPSVETNSHYDS. Residues 658-663 carry the ITIM motif motif; the sequence is VEYTEV. Tyr-660 is modified (phosphotyrosine; by FER).

Trans-homodimer (via Ig-like C2-type 1 and Ig-like C2-type 2 domains); trans-homodimerization is required for cell-cell interaction. Forms a complex with BDKRB2 and GNAQ. Interacts with BDKRB2 and GNAQ. Interacts with PTPN11. Interacts with FER. Interacts with CD177; the interaction is Ca(2+)-dependent; the interaction is direct. In terms of processing, phosphorylated on Ser and Tyr residues after cellular activation. In endothelial cells Fyn mediates mechanical-force (stretch or pull) induced tyrosine phosphorylation. Phosphorylated on tyrosine residues by FER and FES in response to FCER1 activation. Post-translationally, palmitoylation by ZDHHC21 is necessary for cell surface expression in endothelial cells and enrichment in membrane rafts.

It is found in the cell membrane. The protein localises to the membrane raft. Its subcellular location is the cell junction. In terms of biological role, cell adhesion molecule which is required for leukocyte transendothelial migration (TEM) under most inflammatory conditions. Tyr-660 plays a critical role in TEM and is required for efficient trafficking of PECAM1 to and from the lateral border recycling compartment (LBRC) and is also essential for the LBRC membrane to be targeted around migrating leukocytes. Trans-homophilic interaction may play a role in endothelial cell-cell adhesion via cell junctions. Heterophilic interaction with CD177 plays a role in transendothelial migration of neutrophils. Homophilic ligation of PECAM1 prevents macrophage-mediated phagocytosis of neighboring viable leukocytes by transmitting a detachment signal. Promotes macrophage-mediated phagocytosis of apoptotic leukocytes by tethering them to the phagocytic cells; PECAM1-mediated detachment signal appears to be disabled in apoptotic leukocytes. Modulates bradykinin receptor BDKRB2 activation. Regulates bradykinin- and hyperosmotic shock-induced ERK1/2 activation in endothelial cells. Induces susceptibility to atherosclerosis. The chain is Platelet endothelial cell adhesion molecule (Pecam1) from Rattus norvegicus (Rat).